The primary structure comprises 349 residues: S-adenosylmethionine:tRNA ribosyltransferase-isomerase (349 aa).

Belongs to the QueA family. Monomer.

Its subcellular location is the cytoplasm. It catalyses the reaction 7-aminomethyl-7-carbaguanosine(34) in tRNA + S-adenosyl-L-methionine = epoxyqueuosine(34) in tRNA + adenine + L-methionine + 2 H(+). It participates in tRNA modification; tRNA-queuosine biosynthesis. Functionally, transfers and isomerizes the ribose moiety from AdoMet to the 7-aminomethyl group of 7-deazaguanine (preQ1-tRNA) to give epoxyqueuosine (oQ-tRNA). The sequence is that of S-adenosylmethionine:tRNA ribosyltransferase-isomerase from Ruegeria pomeroyi (strain ATCC 700808 / DSM 15171 / DSS-3) (Silicibacter pomeroyi).